The sequence spans 161 residues: Bifurcating [FeFe] hydrogenase gamma subunit (161 aa).

4 residues coordinate [2Fe-2S] cluster: C78, C83, C119, and C123.

The protein belongs to the complex I 24 kDa subunit family. As to quaternary structure, heterotrimer composed of HydA (alpha subunit), HydB (beta subunit) and HydC (gamma subunit). Near neutral and acidic pH conditions favor oligomerization of the heterotrimeric holoenzyme. [2Fe-2S] cluster serves as cofactor.

The protein localises to the cytoplasm. The catalysed reaction is 2 H2 + 2 oxidized [2Fe-2S]-[ferredoxin] + NAD(+) = 2 reduced [2Fe-2S]-[ferredoxin] + NADH + 3 H(+). Functionally, catalyzes the oxidation of the physiological electron carriers NADH and reduced ferredoxin, coupled to the production of H(2). Acts as a bifurcating [FeFe] hydrogenase, which uses the exergonic oxidation of reduced ferredoxin to drive the unfavorable oxidation of NADH to produce H(2). The gamma subunit might be the site where reduced ferredoxin is oxidized. This is Bifurcating [FeFe] hydrogenase gamma subunit from Thermotoga maritima (strain ATCC 43589 / DSM 3109 / JCM 10099 / NBRC 100826 / MSB8).